The primary structure comprises 292 residues: Claudin-23 (292 aa).

The Cytoplasmic portion of the chain corresponds to 1 to 3 (MRT). Residues 4–24 (PVVMTLGMVLAPCGLLLNLTG) traverse the membrane as a helical segment. Residues 25–81 (TLAPGWRLVKGFLNQPVDVELYQGLWDMCREQSSRERECGQTDQWGYFEAQPVLVAR) lie on the Extracellular side of the membrane. The helical transmembrane segment at 82 to 102 (ALMVTSLAATVLGLLLASLGV) threads the bilayer. At 103 to 110 (RCWQDEPN) the chain is on the cytoplasmic side. A helical transmembrane segment spans residues 111 to 131 (FVLAGLSGVVLFVAGLLGLIP). The Extracellular portion of the chain corresponds to 132 to 160 (VSWYNHFLGDRDVLPAPASPVTVQVSYSL). The helical transmembrane segment at 161 to 181 (VLGYLGSCLLLLGGFSLALSF) threads the bilayer. Over 182 to 292 (APWCDERCRR…DSSLPCDSDL (111 aa)) the chain is Cytoplasmic. Residues 222–292 (KYYSDGQHRP…DSSLPCDSDL (71 aa)) are disordered. The span at 273 to 282 (DAPSCSTHPC) shows a compositional bias: polar residues.

This sequence belongs to the claudin family. Expressed in germinal center B-cells, placenta, stomach as well as in colon tumor.

Its subcellular location is the cell junction. The protein localises to the tight junction. The protein resides in the cell membrane. In terms of biological role, plays a major role in tight junction-specific obliteration of the intercellular space, through calcium-independent cell-adhesion activity. This is Claudin-23 (CLDN23) from Homo sapiens (Human).